Here is a 147-residue protein sequence, read N- to C-terminus: Putative pre-16S rRNA nuclease (147 aa).

Belongs to the YqgF nuclease family.

Its subcellular location is the cytoplasm. In terms of biological role, could be a nuclease involved in processing of the 5'-end of pre-16S rRNA. This is Putative pre-16S rRNA nuclease from Latilactobacillus sakei subsp. sakei (strain 23K) (Lactobacillus sakei subsp. sakei).